Reading from the N-terminus, the 80-residue chain is Raniseptin-7 (80 aa).

Positions 1-22 (MAFLKKSLFLVLFLGIVSLSIC) are cleaved as a signal peptide. The propeptide occupies 23 to 49 (EEEKREGEEEEKQEEENEELSEEELRE). Residues 27–46 (REGEEEEKQEEENEELSEEE) form a disordered region. Positions 30-44 (EEEEKQEEENEELSE) are enriched in acidic residues.

The protein belongs to the frog skin active peptide (FSAP) family. Dermaseptin subfamily. As to expression, expressed by the skin glands.

The protein localises to the secreted. Functionally, has antibacterial activity. The polypeptide is Raniseptin-7 (Boana raniceps (Chaco tree frog)).